The primary structure comprises 388 residues: Xylose isomerase (388 aa).

Residues H54 and D57 contribute to the active site. Positions 181, 217, 220, 245, 255, 257, and 287 each coordinate Mg(2+).

It belongs to the xylose isomerase family. In terms of assembly, homotetramer. Mg(2+) serves as cofactor.

It is found in the cytoplasm. The enzyme catalyses alpha-D-xylose = alpha-D-xylulofuranose. Its function is as follows. Involved in D-xylose catabolism. In Streptomyces rubiginosus, this protein is Xylose isomerase (xylA).